Consider the following 185-residue polypeptide: Ribosome-recycling factor (185 aa).

Belongs to the RRF family.

It localises to the cytoplasm. Responsible for the release of ribosomes from messenger RNA at the termination of protein biosynthesis. May increase the efficiency of translation by recycling ribosomes from one round of translation to another. The polypeptide is Ribosome-recycling factor (Wolbachia sp. subsp. Drosophila simulans (strain wRi)).